Consider the following 406-residue polypeptide: uncharacterized protein (406 aa).

This is an uncharacterized protein from Acanthamoeba polyphaga mimivirus (APMV).